The following is a 700-amino-acid chain: Polycomb protein suz12 (700 aa).

Disordered regions lie at residues 215-250 (DFNGLTNGETNENIDVSEEPPARRKRNSSNRDEGDK) and 319-376 (TNDT…RDVS). Polar residues predominate over residues 218–228 (GLTNGETNENI). Residues 405–428 (LHCPWCTLNCRKLYSLLKHLKLCH) form a C2H2-type zinc finger. The interval 520 to 596 (RLYFHSDTCL…NQMNHGCMLF (77 aa)) is VEFS-box. The segment at 651 to 700 (LAPPSDEAFEEPNRTTSSSSSFMETNGKDRVVENDCVSGQPPKHSKKQKP) is disordered. The span at 664-674 (RTTSSSSSFME) shows a compositional bias: polar residues.

The protein belongs to the VEFS (VRN2-EMF2-FIS2-SU(Z)12) family. As to quaternary structure, component of the prc2/eed-ezh2 complex.

Its subcellular location is the nucleus. Functionally, polycomb group (PcG) protein. Component of the prc2/eed-ezh2 complex, which methylates 'Lys-9' (H3K9me) and 'Lys-27' (H3K27me) of histone H3, leading to transcriptional repression of the affected target gene. The chain is Polycomb protein suz12 (suz12) from Xenopus tropicalis (Western clawed frog).